The following is a 431-amino-acid chain: Glucose-1-phosphate adenylyltransferase (431 aa).

Lys-39 lines the beta-D-fructose 1,6-bisphosphate pocket. 3 residues coordinate AMP: Arg-40, His-46, and Arg-52. Residue Tyr-114 participates in alpha-D-glucose 1-phosphate binding. Arg-130 provides a ligand contact to AMP. Alpha-D-glucose 1-phosphate contacts are provided by residues Gly-179, 194–195 (EK), and Ser-212. Residues Glu-370 and Arg-386 each contribute to the AMP site. Residues 419 to 423 (REMLR) and 429 to 431 (QER) contribute to the beta-D-fructose 1,6-bisphosphate site.

It belongs to the bacterial/plant glucose-1-phosphate adenylyltransferase family. As to quaternary structure, homotetramer.

It carries out the reaction alpha-D-glucose 1-phosphate + ATP + H(+) = ADP-alpha-D-glucose + diphosphate. It functions in the pathway glycan biosynthesis; glycogen biosynthesis. With respect to regulation, allosterically activated by fructose-1,6-bisphosphate (F16BP) and inhibited by AMP. In terms of biological role, involved in the biosynthesis of ADP-glucose, a building block required for the elongation reactions to produce glycogen. Catalyzes the reaction between ATP and alpha-D-glucose 1-phosphate (G1P) to produce pyrophosphate and ADP-Glc. The polypeptide is Glucose-1-phosphate adenylyltransferase (Salmonella paratyphi C (strain RKS4594)).